The primary structure comprises 300 residues: Eukaryotic translation initiation factor 3 subunit F (300 aa).

The MPN domain maps to V33–G169.

It belongs to the eIF-3 subunit F family. In terms of assembly, component of the eukaryotic translation initiation factor 3 (eIF-3) complex.

Its subcellular location is the cytoplasm. Functionally, component of the eukaryotic translation initiation factor 3 (eIF-3) complex, which is involved in protein synthesis of a specialized repertoire of mRNAs and, together with other initiation factors, stimulates binding of mRNA and methionyl-tRNAi to the 40S ribosome. The eIF-3 complex specifically targets and initiates translation of a subset of mRNAs involved in cell proliferation. This chain is Eukaryotic translation initiation factor 3 subunit F, found in Malassezia globosa (strain ATCC MYA-4612 / CBS 7966) (Dandruff-associated fungus).